A 194-amino-acid polypeptide reads, in one-letter code: Imidazoleglycerol-phosphate dehydratase (194 aa).

The protein belongs to the imidazoleglycerol-phosphate dehydratase family.

The protein localises to the cytoplasm. The enzyme catalyses D-erythro-1-(imidazol-4-yl)glycerol 3-phosphate = 3-(imidazol-4-yl)-2-oxopropyl phosphate + H2O. It participates in amino-acid biosynthesis; L-histidine biosynthesis; L-histidine from 5-phospho-alpha-D-ribose 1-diphosphate: step 6/9. In Bacillus thuringiensis (strain Al Hakam), this protein is Imidazoleglycerol-phosphate dehydratase.